Reading from the N-terminus, the 908-residue chain is Vacuolar membrane protease (908 aa).

The tract at residues 1–25 (MTSGEEEEGTREQVPVSQPTGTTSI) is disordered. At 1-48 (MTSGEEEEGTREQVPVSQPTGTTSIVSTKEKQPNIFIRAIRATFGYRK) the chain is on the cytoplasmic side. Over residues 15 to 25 (PVSQPTGTTSI) the composition is skewed to polar residues. A helical membrane pass occupies residues 49–69 (TSLTLFVLLTIFFTVAFSSYD). The Vacuolar portion of the chain corresponds to 70–381 (NSLDFTIDLP…FSTSVTTLNT (312 aa)). Residues asparagine 143 and asparagine 162 are each glycosylated (N-linked (GlcNAc...) asparagine). Positions 176 and 188 each coordinate Zn(2+). Catalysis depends on glutamate 221, which acts as the Proton acceptor. 3 residues coordinate Zn(2+): glutamate 222, glutamate 247, and histidine 319. Asparagine 354 carries an N-linked (GlcNAc...) asparagine glycan. Residues 382–402 (INMVLIVLFPVLSGPLLFITV) form a helical membrane-spanning segment. Residues 403–411 (RYKKWNIGT) are Cytoplasmic-facing. The helical transmembrane segment at 412–432 (ANLFSLPLAIVITSLVGAVVV) threads the bilayer. Residues 433-449 (NQGFRLVNEFLPASRPM) lie on the Vacuolar side of the membrane. Residues 450–470 (LLVTTTTSILLLTYYILLNGI) traverse the membrane as a helical segment. Topologically, residues 471-480 (NFVSPSGDQK) are cytoplasmic. Residues 481–501 (LVSIIQISFIYWIALIFVTRG) traverse the membrane as a helical segment. Residues 502–514 (LSQNAIGDDHTGE) lie on the Vacuolar side of the membrane. A helical membrane pass occupies residues 515 to 535 (FAFTILFLLEATASLFGLIGW). Topologically, residues 536–602 (TFTRSVKEPT…MQHFGYDWSL (67 aa)) are cytoplasmic. The interval 543-584 (EPTGDEEPLLNGRMERYVDGSDDEDDVEEEDDEDQSEEENHQ) is disordered. The segment covering 562 to 579 (GSDDEDDVEEEDDEDQSE) has biased composition (acidic residues). Residues 603–623 (QFLLIVPISSLVIYNSGWLVI) traverse the membrane as a helical segment. Topologically, residues 624–638 (DGINKSIQESLVAEN) are vacuolar. Asparagine 627 carries N-linked (GlcNAc...) asparagine glycosylation. Residues 639-659 (FIYLIIQLFSQFWILPILPFV) traverse the membrane as a helical segment. The Cytoplasmic segment spans residues 660 to 664 (YKLNR). A helical membrane pass occupies residues 665 to 685 (FMVLGLIAFALVGVTLISSVD). The Vacuolar segment spans residues 686 to 908 (PFNQDNPLKL…LVSLTNRIEV (223 aa)). Asparagine 752 and asparagine 764 each carry an N-linked (GlcNAc...) asparagine glycan.

It belongs to the peptidase M28 family. Requires Zn(2+) as cofactor.

Its subcellular location is the vacuole membrane. May be involved in vacuolar sorting and osmoregulation. This Candida tropicalis (strain ATCC MYA-3404 / T1) (Yeast) protein is Vacuolar membrane protease.